Reading from the N-terminus, the 222-residue chain is Probable transaldolase (222 aa).

Lys-91 serves as the catalytic Schiff-base intermediate with substrate.

The protein belongs to the transaldolase family. Type 3B subfamily.

Its subcellular location is the cytoplasm. It carries out the reaction D-sedoheptulose 7-phosphate + D-glyceraldehyde 3-phosphate = D-erythrose 4-phosphate + beta-D-fructose 6-phosphate. Its pathway is carbohydrate degradation; pentose phosphate pathway; D-glyceraldehyde 3-phosphate and beta-D-fructose 6-phosphate from D-ribose 5-phosphate and D-xylulose 5-phosphate (non-oxidative stage): step 2/3. Transaldolase is important for the balance of metabolites in the pentose-phosphate pathway. The sequence is that of Probable transaldolase from Chlorobaculum tepidum (strain ATCC 49652 / DSM 12025 / NBRC 103806 / TLS) (Chlorobium tepidum).